The following is a 178-amino-acid chain: Small ribosomal subunit protein uS4 (178 aa).

One can recognise an S4 RNA-binding domain in the interval 104–166 (RRLQTMVYKK…PNSPMASENH (63 aa)). The disordered stretch occupies residues 157-178 (PNSPMASENHPERTAAVSEENQ).

It belongs to the universal ribosomal protein uS4 family. In terms of assembly, part of the 30S ribosomal subunit. Contacts protein S5. The interaction surface between S4 and S5 is involved in control of translational fidelity.

Its function is as follows. One of the primary rRNA binding proteins, it binds directly to 16S rRNA where it nucleates assembly of the body of the 30S subunit. In terms of biological role, with S5 and S12 plays an important role in translational accuracy. In Methanococcus maripaludis (strain C7 / ATCC BAA-1331), this protein is Small ribosomal subunit protein uS4.